We begin with the raw amino-acid sequence, 516 residues long: Maturase K (516 aa).

The protein belongs to the intron maturase 2 family. MatK subfamily.

It localises to the plastid. The protein resides in the chloroplast. Usually encoded in the trnK tRNA gene intron. Probably assists in splicing its own and other chloroplast group II introns. In Cypripedium calceolus (Yellow lady's slipper), this protein is Maturase K.